Here is a 662-residue protein sequence, read N- to C-terminus: UvrABC system protein B (662 aa).

A Helicase ATP-binding domain is found at 25-182 (KGIEKREKFQ…KKLVEIQYER (158 aa)). ATP is bound at residue 38–45 (GVTGSGKT). The Beta-hairpin signature appears at 91 to 114 (YYDYYQPEAYVAQSDTYIEKDASI). The 167-residue stretch at 429-595 (QIDDLYTSIQ…TIIKDIREVI (167 aa)) folds into the Helicase C-terminal domain. A UVR domain is found at 622-657 (DKLIEKYEEEMKEAAQNLQFEKAAHLRDVIYKLKKD).

It belongs to the UvrB family. As to quaternary structure, forms a heterotetramer with UvrA during the search for lesions. Interacts with UvrC in an incision complex.

The protein resides in the cytoplasm. Functionally, the UvrABC repair system catalyzes the recognition and processing of DNA lesions. A damage recognition complex composed of 2 UvrA and 2 UvrB subunits scans DNA for abnormalities. Upon binding of the UvrA(2)B(2) complex to a putative damaged site, the DNA wraps around one UvrB monomer. DNA wrap is dependent on ATP binding by UvrB and probably causes local melting of the DNA helix, facilitating insertion of UvrB beta-hairpin between the DNA strands. Then UvrB probes one DNA strand for the presence of a lesion. If a lesion is found the UvrA subunits dissociate and the UvrB-DNA preincision complex is formed. This complex is subsequently bound by UvrC and the second UvrB is released. If no lesion is found, the DNA wraps around the other UvrB subunit that will check the other stand for damage. The protein is UvrABC system protein B of Clostridium botulinum (strain Langeland / NCTC 10281 / Type F).